An 854-amino-acid chain; its full sequence is Zinc finger protein 341 (854 aa).

A C2H2-type 1; atypical zinc finger spans residues 53-76 (FLCGKCKKQFNSLPAFMTHKREQC). A disordered region spans residues 152 to 217 (DQPMPQGPPP…GRPNPGGNGV (66 aa)). A compositionally biased stretch (polar residues) spans 163–176 (QSSLNMHSVPSYLT). Residues 177 to 210 (QPPPPPPPPPPLPPPPPPQPPPPPPQSLGPPGRP) show a composition bias toward pro residues. C2H2-type zinc fingers lie at residues 322-344 (LKCS…IRSH) and 350-372 (FQCI…MQTH). A disordered region spans residues 399–434 (SRQEDEESTGLGQPLPGAPQPQALSTAGEEEGDKPE). The segment covering 408–422 (GLGQPLPGAPQPQAL) has biased composition (low complexity). C2H2-type zinc fingers lie at residues 445-467 (YLCQ…MTQH), 473-497 (YKCV…IKSH), 503-525 (YRCH…QYSH), 540-564 (YKCV…TATH), 566-588 (FPCP…LPTH), 594-616 (FKCQ…AHIH), 622-644 (YKCS…MLIH), 650-677 (YKCP…ILSH), and 683-705 (HKCA…QRAH). The segment at 731–763 (CRLGPQKDKDLQTRRPPQRRAAPRSCGSGGRKV) is disordered.

The protein belongs to the krueppel C2H2-type zinc-finger protein family. Binds DNA and to the STAT3 promoter.

The protein localises to the nucleus. Its function is as follows. Transcriptional activator of STAT3 involved in the regulation of immune homeostasis. Also able to activate STAT1 transcription. This chain is Zinc finger protein 341 (ZNF341), found in Homo sapiens (Human).